A 154-amino-acid polypeptide reads, in one-letter code: 6,7-dimethyl-8-ribityllumazine synthase (154 aa).

Residues Phe-15, 47–49, and 71–73 each bind 5-amino-6-(D-ribitylamino)uracil; these read TFD and AVI. 76–77 contacts (2S)-2-hydroxy-3-oxobutyl phosphate; the sequence is ET. His-79 (proton donor) is an active-site residue. 5-amino-6-(D-ribitylamino)uracil is bound at residue Leu-104. Residue Arg-119 coordinates (2S)-2-hydroxy-3-oxobutyl phosphate.

It belongs to the DMRL synthase family.

The catalysed reaction is (2S)-2-hydroxy-3-oxobutyl phosphate + 5-amino-6-(D-ribitylamino)uracil = 6,7-dimethyl-8-(1-D-ribityl)lumazine + phosphate + 2 H2O + H(+). It functions in the pathway cofactor biosynthesis; riboflavin biosynthesis; riboflavin from 2-hydroxy-3-oxobutyl phosphate and 5-amino-6-(D-ribitylamino)uracil: step 1/2. Catalyzes the formation of 6,7-dimethyl-8-ribityllumazine by condensation of 5-amino-6-(D-ribitylamino)uracil with 3,4-dihydroxy-2-butanone 4-phosphate. This is the penultimate step in the biosynthesis of riboflavin. The protein is 6,7-dimethyl-8-ribityllumazine synthase of Saccharolobus solfataricus (strain ATCC 35092 / DSM 1617 / JCM 11322 / P2) (Sulfolobus solfataricus).